Reading from the N-terminus, the 129-residue chain is Small ribosomal subunit protein uS11 (129 aa).

The protein belongs to the universal ribosomal protein uS11 family. In terms of assembly, part of the 30S ribosomal subunit. Interacts with proteins S7 and S18. Binds to IF-3.

Functionally, located on the platform of the 30S subunit, it bridges several disparate RNA helices of the 16S rRNA. Forms part of the Shine-Dalgarno cleft in the 70S ribosome. The polypeptide is Small ribosomal subunit protein uS11 (Yersinia enterocolitica serotype O:8 / biotype 1B (strain NCTC 13174 / 8081)).